The sequence spans 408 residues: Arginine biosynthesis bifunctional protein ArgJ (408 aa).

Positions 156, 182, 193, 279, 403, and 408 each coordinate substrate. Catalysis depends on Thr193, which acts as the Nucleophile.

It belongs to the ArgJ family. As to quaternary structure, heterotetramer of two alpha and two beta chains.

The protein localises to the cytoplasm. It catalyses the reaction N(2)-acetyl-L-ornithine + L-glutamate = N-acetyl-L-glutamate + L-ornithine. The enzyme catalyses L-glutamate + acetyl-CoA = N-acetyl-L-glutamate + CoA + H(+). It functions in the pathway amino-acid biosynthesis; L-arginine biosynthesis; L-ornithine and N-acetyl-L-glutamate from L-glutamate and N(2)-acetyl-L-ornithine (cyclic): step 1/1. The protein operates within amino-acid biosynthesis; L-arginine biosynthesis; N(2)-acetyl-L-ornithine from L-glutamate: step 1/4. Catalyzes two activities which are involved in the cyclic version of arginine biosynthesis: the synthesis of N-acetylglutamate from glutamate and acetyl-CoA as the acetyl donor, and of ornithine by transacetylation between N(2)-acetylornithine and glutamate. The chain is Arginine biosynthesis bifunctional protein ArgJ from Bordetella bronchiseptica (strain ATCC BAA-588 / NCTC 13252 / RB50) (Alcaligenes bronchisepticus).